Reading from the N-terminus, the 224-residue chain is Deoxyribose-phosphate aldolase (224 aa).

Catalysis depends on D93, which acts as the Proton donor/acceptor. The active-site Schiff-base intermediate with acetaldehyde is the K159. Catalysis depends on K189, which acts as the Proton donor/acceptor.

This sequence belongs to the DeoC/FbaB aldolase family. DeoC type 1 subfamily.

Its subcellular location is the cytoplasm. The catalysed reaction is 2-deoxy-D-ribose 5-phosphate = D-glyceraldehyde 3-phosphate + acetaldehyde. Its pathway is carbohydrate degradation; 2-deoxy-D-ribose 1-phosphate degradation; D-glyceraldehyde 3-phosphate and acetaldehyde from 2-deoxy-alpha-D-ribose 1-phosphate: step 2/2. Its function is as follows. Catalyzes a reversible aldol reaction between acetaldehyde and D-glyceraldehyde 3-phosphate to generate 2-deoxy-D-ribose 5-phosphate. This chain is Deoxyribose-phosphate aldolase, found in Mycobacterium bovis (strain ATCC BAA-935 / AF2122/97).